A 340-amino-acid polypeptide reads, in one-letter code: Putative phosphatidylcholine:ceramide cholinephosphotransferase 3 (340 aa).

A disordered region spans residues 1–25 (MGSVSKTVISARGASPDDEQNGTKN). The next 4 membrane-spanning stretches (helical) occupy residues 36-56 (CIFL…VLAY), 81-101 (SSLG…LLVI), 178-198 (LLFS…AYYL), and 202-222 (IKPL…CMTI). Histidine 183 is an active-site residue. The Cytoplasmic segment spans residues 223 to 340 (SRTHYTIDVV…SSSSTYPLPC (118 aa)). Residues histidine 226 and aspartate 230 contribute to the active site. A disordered region spans residues 294-313 (STPRGQERGGASAESSDSSV).

Belongs to the sphingomyelin synthase family.

The protein localises to the membrane. It carries out the reaction an N-acyl-sphingoid base + a 1,2-diacyl-sn-glycero-3-phosphocholine = an N-(acyl)-sphingosylphosphocholine + a 1,2-diacyl-sn-glycerol. It catalyses the reaction an N-acylsphing-4-enine + a 1,2-diacyl-sn-glycero-3-phosphocholine = a sphingomyelin + a 1,2-diacyl-sn-glycerol. The enzyme catalyses an N-acyl-15-methylhexadecasphing-4-enine + a 1,2-diacyl-sn-glycero-3-phosphocholine = an N-acyl-15-methylhexadecasphing-4-enine-1-phosphocholine + a 1,2-diacyl-sn-glycerol. It functions in the pathway lipid metabolism; sphingolipid metabolism. Bidirectional lipid cholinephosphotransferase capable of converting phosphatidylcholine (PC) and ceramide to sphingomyelin (SM) and diacylglycerol (DAG) and vice versa. Direction is dependent on the relative concentrations of DAG and ceramide as phosphocholine acceptors. Directly and specifically recognizes the choline head group on the substrate. Also requires two fatty chains on the choline-P donor molecule in order to be recognized efficiently as a substrate. Does not function strictly as a SM synthase. C.elegans contains specific sphingoid bases, which are unique or different in structure compared to the sphingoid bases found in other animals. Two examples of these distinctive compounds are: 15-methylhexadecasphinganine and 15-methylhexadecasphing-4-enine. This chain is Putative phosphatidylcholine:ceramide cholinephosphotransferase 3 (sms-3), found in Caenorhabditis elegans.